A 374-amino-acid chain; its full sequence is Beta-lytic metalloendopeptidase (374 aa).

The N-terminal stretch at 1–24 (MKKISKAGLGLALVCALATIGGNA) is a signal peptide. Residues 25-195 (ARRATAQRRG…RQGRPGRAAV (171 aa)) constitute a propeptide that is removed on maturation. Residues 128 to 187 (PTRQGAGDAGPRQSAAGAVRAFRRQRAGGRAARRRRVPAGLRPPVQRTAPGQGGFGPLRQ) are disordered. The segment covering 148-164 (AFRRQRAGGRAARRRRV) has biased composition (basic residues). A disulfide bridge connects residues C261 and C307. Zn(2+)-binding residues include H316 and H318. Cysteines 351 and 364 form a disulfide.

The protein belongs to the peptidase M23A family. The cofactor is Zn(2+).

The protein localises to the secreted. The enzyme catalyses Cleavage of N-acetylmuramoyl-|-Ala, and of the insulin B chain at 23-Gly-|-Phe-24 &gt; 18-Val-|-Cys(SO3H).. This is Beta-lytic metalloendopeptidase from Achromobacter lyticus.